A 239-amino-acid chain; its full sequence is Transcriptional regulatory protein DcuR (239 aa).

In terms of domain architecture, Response regulatory spans 3–121 (NVLIIDDDAM…RFEEALTGWR (119 aa)). Asp56 is subject to 4-aspartylphosphate. Residues 181-200 (TDELANEVNISRVSCRKYLI) constitute a DNA-binding region (H-T-H motif).

Post-translationally, phosphorylated and activated by DcuS.

The protein resides in the cytoplasm. Member of the two-component regulatory system DcuR/DcuS. Involved in the C4-dicarboxylate-stimulated regulation of the genes encoding the anaerobic fumarate respiratory system (frdABCD; nuoAN; dcuB; dcuC; sdhCDAB; etc.). Weakly regulates the aerobic C4-dicarboxylate transporter dctA. The polypeptide is Transcriptional regulatory protein DcuR (dcuR) (Escherichia coli O6:H1 (strain CFT073 / ATCC 700928 / UPEC)).